A 391-amino-acid chain; its full sequence is Formate-dependent phosphoribosylglycinamide formyltransferase (391 aa).

Residues 20 to 21 (EL) and E80 contribute to the N(1)-(5-phospho-beta-D-ribosyl)glycinamide site. ATP is bound by residues R112, K153, 158–163 (SSGKGQ), 193–196 (EGFI), and E201. An ATP-grasp domain is found at 117-306 (RLAAEELGLT…EFALHVRAFT (190 aa)). E265 and E277 together coordinate Mg(2+). Residues D284, K354, and 361-362 (RR) contribute to the N(1)-(5-phospho-beta-D-ribosyl)glycinamide site.

This sequence belongs to the PurK/PurT family. Homodimer.

The catalysed reaction is N(1)-(5-phospho-beta-D-ribosyl)glycinamide + formate + ATP = N(2)-formyl-N(1)-(5-phospho-beta-D-ribosyl)glycinamide + ADP + phosphate + H(+). The protein operates within purine metabolism; IMP biosynthesis via de novo pathway; N(2)-formyl-N(1)-(5-phospho-D-ribosyl)glycinamide from N(1)-(5-phospho-D-ribosyl)glycinamide (formate route): step 1/1. In terms of biological role, involved in the de novo purine biosynthesis. Catalyzes the transfer of formate to 5-phospho-ribosyl-glycinamide (GAR), producing 5-phospho-ribosyl-N-formylglycinamide (FGAR). Formate is provided by PurU via hydrolysis of 10-formyl-tetrahydrofolate. In Vibrio vulnificus (strain CMCP6), this protein is Formate-dependent phosphoribosylglycinamide formyltransferase.